The sequence spans 313 residues: Ribosomal RNA small subunit methyltransferase H (313 aa).

Residues 35–37, aspartate 55, phenylalanine 80, aspartate 102, and glutamine 109 contribute to the S-adenosyl-L-methionine site; that span reads GGH.

Belongs to the methyltransferase superfamily. RsmH family.

The protein localises to the cytoplasm. It catalyses the reaction cytidine(1402) in 16S rRNA + S-adenosyl-L-methionine = N(4)-methylcytidine(1402) in 16S rRNA + S-adenosyl-L-homocysteine + H(+). Its function is as follows. Specifically methylates the N4 position of cytidine in position 1402 (C1402) of 16S rRNA. In Shewanella denitrificans (strain OS217 / ATCC BAA-1090 / DSM 15013), this protein is Ribosomal RNA small subunit methyltransferase H.